We begin with the raw amino-acid sequence, 470 residues long: Zinc finger protein pat-9 (470 aa).

Residues Met1–Lys25 form a disordered region. 3 consecutive C2H2-type zinc fingers follow at residues Tyr84–His106, Phe112–His134, and Phe140–His162. The segment at Met191–Ser235 is disordered. A Nuclear localization signal motif is present at residues Lys221–Lys230.

This sequence belongs to the krueppel C2H2-type zinc-finger protein family. As to expression, expressed in body wall muscle and gonad (at protein level).

The protein localises to the nucleus. It is found in the chromosome. In terms of biological role, probable transcription factor; required for proper organization of muscle myofilaments and for their recruitment to the M line. This Caenorhabditis elegans protein is Zinc finger protein pat-9.